A 340-amino-acid chain; its full sequence is Melanin-concentrating hormone receptor 2 (340 aa).

Topologically, residues 1–34 (MNPFHSSCWNTSAELSNKSWNKEFAYQTASAVDT) are extracellular. Residues asparagine 10 and asparagine 17 are each glycosylated (N-linked (GlcNAc...) asparagine). The chain crosses the membrane as a helical span at residues 35-57 (VILPSMIGIICSTGLVGNILIVF). Over 58–69 (TIIRSRKKTVPD) the chain is Cytoplasmic. Residues 70 to 92 (IYICNLAVADLVHIIGMPFLIHQ) form a helical membrane-spanning segment. The Extracellular segment spans residues 93–106 (WARGGEWVFGGPLC). Residues 107-129 (TIITSLDTCNQFACSAIMTVMSV) traverse the membrane as a helical segment. Topologically, residues 130–149 (DRYFALVQPFRLTSWRTRYK) are cytoplasmic. The chain crosses the membrane as a helical span at residues 150–172 (TIRINLGLWAASFILALPVWIYS). Topologically, residues 173 to 198 (KVIKFKDGVESCAFDLTSPDDVLWYT) are extracellular. A helical transmembrane segment spans residues 199–221 (LYLTITTFFFPLPLILVCYILIL). Residues 222–252 (CYTWEMYQQNKDARCCNPSVPKQRVMKLTKM) lie on the Cytoplasmic side of the membrane. A helical transmembrane segment spans residues 253–272 (VLVLVAVFILSAAPYHVIQL). The Extracellular segment spans residues 273–286 (VNLQMEQPTLAFYV). The helical transmembrane segment at 287–309 (GYYLSICLSYASSSINPFLYILL) threads the bilayer. Residues 310-340 (SGNFQKRLPQIQRRVTDKEIKNMGNTLKSHF) are Cytoplasmic-facing.

This sequence belongs to the G-protein coupled receptor 1 family.

It is found in the cell membrane. Functionally, receptor for melanin-concentrating hormone, coupled to G proteins that activate phosphoinositide hydrolysis. The protein is Melanin-concentrating hormone receptor 2 (MCHR2) of Macaca fascicularis (Crab-eating macaque).